The following is a 111-amino-acid chain: MGLVIKAALGALVVLLIGVLAKTKNYYIAGLIPLFPTFALIAHYIVASERGIEALRATIIFSMWSIIPYFVYLVSLWYFTGMMRLPAAFVGSVACWGISAWVLIICWIKLH.

At 1–26 the chain is on the cytoplasmic side; that stretch reads MGLVIKAALGALVVLLIGVLAKTKNY. A helical membrane pass occupies residues 27–47; the sequence is YIAGLIPLFPTFALIAHYIVA. The Periplasmic segment spans residues 48 to 58; the sequence is SERGIEALRAT. The chain crosses the membrane as a helical span at residues 59–79; it reads IIFSMWSIIPYFVYLVSLWYF. Residues 80–87 lie on the Cytoplasmic side of the membrane; sequence TGMMRLPA. A helical transmembrane segment spans residues 88-108; it reads AFVGSVACWGISAWVLIICWI. Topologically, residues 109–111 are periplasmic; the sequence is KLH.

It to P.aeruginosa GlpM.

Its subcellular location is the cell inner membrane. This chain is Inner membrane protein YdgC (ydgC), found in Escherichia coli O157:H7.